We begin with the raw amino-acid sequence, 235 residues long: MPPKKRRRQSQKAQLLFHQQPLEGPKHHYESCQQPITHTVQVPSKPIDQSTVTSWVSPQFDRAAESRFLIHWKPHRDQARRPTRRSTCKFPRLTFESPQSSSSETLLLSNRVQPQNSEKDPPRRPLVPLFSPQSCGELSVHVPHSLPHVFAPPDIQTPDSSVRDDPISPDQKENSFPSCILGPGTPSSPEPGPVLVKDTPEEKYGIKVTWRRRRHLFAYLKEKGKLDGSQFLVKI.

The residue at position 50 (S50) is a Phosphoserine. The short motif at 54–60 (SWVSPQF) is the RAD1-binding motif element. Disordered regions lie at residues 75 to 106 (HRDQARRPTRRSTCKFPRLTFESPQSSSSETL), 111 to 130 (RVQPQNSEKDPPRRPLVPLF), and 149 to 198 (VFAP…LVKD). The span at 96-106 (ESPQSSSSETL) shows a compositional bias: polar residues. Positions 123 to 130 (RRPLVPLF) match the D-box motif. Positions 161 to 173 (SVRDDPISPDQKE) are enriched in basic and acidic residues. A KEN box motif is present at residues 171–175 (QKENS).

In terms of assembly, interacts (when phosphorylated by PLK1) with POLQ; promoting POLQ recruitment to DNA damage sites. Interacts with RAD1; interaction is direct and promotes association with the 9-1-1 (RAD9-RAD1-HUS1) complex. Interacts with RAD18. Interacts with TOPBP1. Interacts with UBE2N. Post-translationally, phosphorylated at Ser-50 by PLK1, promoting interaction with polymerase theta (POLQ). Ubiquitinated and degraded by the APC/C complex upon mitotic exit.

The protein localises to the nucleus. It is found in the chromosome. Its function is as follows. Involved in microhomology-mediated end-joining (MMEJ) DNA repair by promoting recruitment of polymerase theta (POLQ) to DNA damage sites during mitosis. MMEJ is an alternative non-homologous end-joining (NHEJ) machinery that takes place during mitosis to repair double-strand breaks in DNA that originate in S-phase. Accumulates in M-phase; following phosphorylation by PLK1, interacts with POLQ, enabling its recruitment to double-strand breaks for subsequent repair. Also involved in the DNA damage response (DDR) signaling in response to genotoxic stresses such as ionizing radiation (IR) during the S phase. Recruited to sites of DNA damage through interaction with the 9-1-1 cell-cycle checkpoint response complex and TOPBP1 in a ATR-dependent manner. Required for the progression of the G1 to S phase transition. Plays a role in the stimulation of CHEK1 phosphorylation. The protein is RAD9, HUS1, RAD1-interacting nuclear orphan protein 1 (Rhno1) of Mus musculus (Mouse).